Consider the following 876-residue polypeptide: Alanine--tRNA ligase (876 aa).

The residue at position 74 (Lys74) is an N6-acetyllysine. Residues His564, His568, Cys666, and His670 each contribute to the Zn(2+) site.

Belongs to the class-II aminoacyl-tRNA synthetase family. As to quaternary structure, homotetramer. It depends on Zn(2+) as a cofactor.

It is found in the cytoplasm. It catalyses the reaction tRNA(Ala) + L-alanine + ATP = L-alanyl-tRNA(Ala) + AMP + diphosphate. In terms of biological role, catalyzes the attachment of alanine to tRNA(Ala) in a two-step reaction: alanine is first activated by ATP to form Ala-AMP and then transferred to the acceptor end of tRNA(Ala). Also edits incorrectly charged Ser-tRNA(Ala) and Gly-tRNA(Ala) via its editing domain. The polypeptide is Alanine--tRNA ligase (Shigella sonnei (strain Ss046)).